Here is a 545-residue protein sequence, read N- to C-terminus: CTP synthase (545 aa).

The amidoligase domain stretch occupies residues 1–266; the sequence is MTTKYIFVTG…DQLVVDRFGL (266 aa). Ser14 contributes to the CTP binding site. Residue Ser14 participates in UTP binding. ATP contacts are provided by residues 15–20 and Asp72; that span reads SLGKGI. Residues Asp72 and Glu140 each contribute to the Mg(2+) site. CTP-binding positions include 147-149, 187-192, and Lys223; these read DIE and KTKPTQ. Residues 187-192 and Lys223 each bind UTP; that span reads KTKPTQ. 239 to 241 contacts ATP; sequence KDV. The Glutamine amidotransferase type-1 domain maps to 291 to 542; sequence TIGMVGKYVS…IQAAGEYMKR (252 aa). An L-glutamine-binding site is contributed by Gly352. The Nucleophile; for glutamine hydrolysis role is filled by Cys379. L-glutamine is bound by residues 380-383, Glu403, and Arg470; that span reads LGMQ. Catalysis depends on residues His515 and Glu517.

It belongs to the CTP synthase family. In terms of assembly, homotetramer.

It carries out the reaction UTP + L-glutamine + ATP + H2O = CTP + L-glutamate + ADP + phosphate + 2 H(+). It catalyses the reaction L-glutamine + H2O = L-glutamate + NH4(+). The enzyme catalyses UTP + NH4(+) + ATP = CTP + ADP + phosphate + 2 H(+). It participates in pyrimidine metabolism; CTP biosynthesis via de novo pathway; CTP from UDP: step 2/2. Allosterically activated by GTP, when glutamine is the substrate; GTP has no effect on the reaction when ammonia is the substrate. The allosteric effector GTP functions by stabilizing the protein conformation that binds the tetrahedral intermediate(s) formed during glutamine hydrolysis. Inhibited by the product CTP, via allosteric rather than competitive inhibition. Catalyzes the ATP-dependent amination of UTP to CTP with either L-glutamine or ammonia as the source of nitrogen. Regulates intracellular CTP levels through interactions with the four ribonucleotide triphosphates. The sequence is that of CTP synthase from Tolumonas auensis (strain DSM 9187 / NBRC 110442 / TA 4).